Reading from the N-terminus, the 432-residue chain is 3-phosphoshikimate 1-carboxyvinyltransferase (432 aa).

Residues lysine 23, serine 24, and arginine 28 each contribute to the 3-phosphoshikimate site. Lysine 23 provides a ligand contact to phosphoenolpyruvate. Phosphoenolpyruvate contacts are provided by glycine 95 and arginine 123. 3-phosphoshikimate is bound by residues serine 166, glutamine 168, aspartate 315, and lysine 342. Residue glutamine 168 coordinates phosphoenolpyruvate. Aspartate 315 functions as the Proton acceptor in the catalytic mechanism. Phosphoenolpyruvate is bound by residues arginine 346 and arginine 390.

Belongs to the EPSP synthase family. As to quaternary structure, monomer.

It is found in the cytoplasm. It catalyses the reaction 3-phosphoshikimate + phosphoenolpyruvate = 5-O-(1-carboxyvinyl)-3-phosphoshikimate + phosphate. It functions in the pathway metabolic intermediate biosynthesis; chorismate biosynthesis; chorismate from D-erythrose 4-phosphate and phosphoenolpyruvate: step 6/7. Functionally, catalyzes the transfer of the enolpyruvyl moiety of phosphoenolpyruvate (PEP) to the 5-hydroxyl of shikimate-3-phosphate (S3P) to produce enolpyruvyl shikimate-3-phosphate and inorganic phosphate. The protein is 3-phosphoshikimate 1-carboxyvinyltransferase of Lactiplantibacillus plantarum (strain ATCC BAA-793 / NCIMB 8826 / WCFS1) (Lactobacillus plantarum).